A 132-amino-acid polypeptide reads, in one-letter code: Small ribosomal subunit protein uS8 (132 aa).

This sequence belongs to the universal ribosomal protein uS8 family. As to quaternary structure, part of the 30S ribosomal subunit. Contacts proteins S5 and S12.

Functionally, one of the primary rRNA binding proteins, it binds directly to 16S rRNA central domain where it helps coordinate assembly of the platform of the 30S subunit. This is Small ribosomal subunit protein uS8 from Borreliella afzelii (strain PKo) (Borrelia afzelii).